Reading from the N-terminus, the 156-residue chain is ATP synthase subunit b (156 aa).

A helical membrane pass occupies residues 7–26 (FIGQMVAFAIFIYLTYRYVW).

Belongs to the ATPase B chain family. In terms of assembly, F-type ATPases have 2 components, F(1) - the catalytic core - and F(0) - the membrane proton channel. F(1) has five subunits: alpha(3), beta(3), gamma(1), delta(1), epsilon(1). F(0) has three main subunits: a(1), b(2) and c(10-14). The alpha and beta chains form an alternating ring which encloses part of the gamma chain. F(1) is attached to F(0) by a central stalk formed by the gamma and epsilon chains, while a peripheral stalk is formed by the delta and b chains.

It localises to the cell inner membrane. Functionally, f(1)F(0) ATP synthase produces ATP from ADP in the presence of a proton or sodium gradient. F-type ATPases consist of two structural domains, F(1) containing the extramembraneous catalytic core and F(0) containing the membrane proton channel, linked together by a central stalk and a peripheral stalk. During catalysis, ATP synthesis in the catalytic domain of F(1) is coupled via a rotary mechanism of the central stalk subunits to proton translocation. In terms of biological role, component of the F(0) channel, it forms part of the peripheral stalk, linking F(1) to F(0). The chain is ATP synthase subunit b from Cellvibrio japonicus (strain Ueda107) (Pseudomonas fluorescens subsp. cellulosa).